We begin with the raw amino-acid sequence, 519 residues long: MSVGEVQVIQAWLRSEWHIQVPPAWLDACVNWIKEEADRASIPQSQLNQRVLEQWLLTDLRDLAHPVLPERISEAQKTVLSNRCCVQMDSLLDVSQPAYNQLQRIRGTDCSNDQVSAVTQETQRPWEAKPTRMLMLQLTDGVQNLEGMEYRPIPALNANLPPGTKLQLVGPIAVRLGVLLLKAENIKVLGGEVEQLLEIHSQSRVLCGTLGLPEETHPQQEPDGLVASVADSGYSSLASEASLRHPQSQPLPQISRQDDWDMDEIPDDDFRSIPDHFDDLPQNNNPLEDVPEDFDDIPLDELDNVMCPIDVEVSAGTLEDPERNKHDSSLLNGSKPEEVSFPSRSRLGNTYQSRTLNKVPNTSLASCSTSTLDSSACKETPMYLCSLQAGCWPPKSPQVFRLQAFIVTLVGNLRISGGVWKLGATISDGSGYLDVDLSDNMLSELIGFSAAETRVLRKDLARRGEVDSGIQHCQRELVDMCCMMSVQVDLTGRGVVLSASPISDRECSEMQKRVKEARR.

2 stretches are compositionally biased toward polar residues: residues 238–255 and 342–353; these read ASEA…PQIS and PSRSRLGNTYQS. Disordered stretches follow at residues 238 to 263 and 314 to 353; these read ASEA…WDMD and SAGT…TYQS.

It belongs to the RMI1 family. As to quaternary structure, component of the RMI complex, containing at least TOP3A, RMI1 and RMI2.

The protein localises to the nucleus. In terms of biological role, essential component of the RMI complex, a complex that plays an important role in the processing of homologous recombination intermediates to limit DNA crossover formation in cells. Promotes TOP3A binding to double Holliday junctions (DHJ) and hence stimulates TOP3A-mediated dissolution. Required for BLM phosphorylation during mitosis. Within the BLM complex, required for BLM and TOP3A stability. The protein is RecQ-mediated genome instability protein 1 (rmi1) of Danio rerio (Zebrafish).